Reading from the N-terminus, the 236-residue chain is N-acetyl-alpha-D-glucosaminyl L-malate deacetylase 1 (236 aa).

Zn(2+)-binding residues include H12, D15, and H113.

This sequence belongs to the PIGL family. The cofactor is Zn(2+).

It catalyses the reaction (S)-malyl N-acetyl-alpha-D-glucosaminide + H2O = (S)-malyl alpha-D-glucosaminide + acetate. In terms of biological role, involved in bacillithiol (BSH) biosynthesis. Catalyzes the second step of the pathway, the deacetylation of N-acetylglucosaminylmalate (GlcNAc-Mal) to glucosamine malate (GlcN-Mal). This is N-acetyl-alpha-D-glucosaminyl L-malate deacetylase 1 from Bacillus subtilis (strain 168).